Reading from the N-terminus, the 455-residue chain is L-serine dehydratase 2 (455 aa).

This sequence belongs to the iron-sulfur dependent L-serine dehydratase family. [4Fe-4S] cluster is required as a cofactor. In terms of processing, activated by post-translational modification by a system involving at least three gene products. Activation is mimicked in vitro by iron and dithiothreitol. There is considerable evidence for a free-radical activation mechanism.

The enzyme catalyses L-serine = pyruvate + NH4(+). The protein operates within carbohydrate biosynthesis; gluconeogenesis. Functionally, also deaminates threonine, particularly when it is present in high concentration. The polypeptide is L-serine dehydratase 2 (sdaB) (Escherichia coli (strain K12)).